The primary structure comprises 251 residues: Large ribosomal subunit protein uL16m (251 aa).

The N-terminal 29 residues, 1–29 (MWRLLARASAPLLRVPLSDSWALLPASAG), are a transit peptide targeting the mitochondrion.

This sequence belongs to the universal ribosomal protein uL16 family. As to quaternary structure, component of the mitochondrial large ribosomal subunit (mt-LSU). Mature mammalian 55S mitochondrial ribosomes consist of a small (28S) and a large (39S) subunit. The 28S small subunit contains a 12S ribosomal RNA (12S mt-rRNA) and 30 different proteins. The 39S large subunit contains a 16S rRNA (16S mt-rRNA), a copy of mitochondrial valine transfer RNA (mt-tRNA(Val)), which plays an integral structural role, and 52 different proteins.

It localises to the mitochondrion. This Homo sapiens (Human) protein is Large ribosomal subunit protein uL16m (MRPL16).